We begin with the raw amino-acid sequence, 116 residues long: Large ribosomal subunit protein bL17 (116 aa).

This sequence belongs to the bacterial ribosomal protein bL17 family. As to quaternary structure, part of the 50S ribosomal subunit. Contacts protein L32.

This chain is Large ribosomal subunit protein bL17, found in Fusobacterium nucleatum subsp. nucleatum (strain ATCC 25586 / DSM 15643 / BCRC 10681 / CIP 101130 / JCM 8532 / KCTC 2640 / LMG 13131 / VPI 4355).